The primary structure comprises 330 residues: Solute carrier family 25 member 16 (330 aa).

3 Solcar repeats span residues 32–118, 126–214, and 236–326; these read FYWL…YKTL, SGHV…LKSV, and LKTH…MKQF. Transmembrane regions (helical) follow at residues 33-52, 95-112, 132-149, 189-209, 242-262, and 297-317; these read YWLR…KTTV, GAMM…FMAF, LMAG…TYPL, GLMP…FTFG, LLCG…FDVT, and GLYR…AVAF.

This sequence belongs to the mitochondrial carrier (TC 2.A.29) family. As to expression, mostly in thyroid, liver, lung, kidney and to a lesser extent in heart and skeletal muscle.

The protein localises to the mitochondrion inner membrane. In terms of biological role, may be involved in the transport of coenzyme A in the mitochondrial matrix. Very little is known about the physiological function of this carrier. The protein is Solute carrier family 25 member 16 (SLC25A16) of Bos taurus (Bovine).